Here is a 52-residue protein sequence, read N- to C-terminus: UPF0391 membrane protein ACIAD3602 (52 aa).

The next 2 membrane-spanning stretches (helical) occupy residues 6–26 (IIFA…VAGL) and 30–50 (FAVI…ISRG).

It belongs to the UPF0391 family.

Its subcellular location is the cell membrane. The protein is UPF0391 membrane protein ACIAD3602 of Acinetobacter baylyi (strain ATCC 33305 / BD413 / ADP1).